The sequence spans 444 residues: MRWKRMERRPPLTPLRRSRTQSSGGGLTICPRCALKLPKATRISERPWASTWQLNQHIQVSKTKKATAYLKAPREWGQCTHQDPDWSKRLGRGAFGIIVPISEDLCVKQFDSRREFFYEAIANDLMQATRERYPMHSGGSRLLGFVQPCIPCRSIVYPRMKCNLLQLDWSQVNLSVMAAEFTGLMAAVSFLNRYCGMVHCDVSPDNILATGDLTPMNPGRLVLTDFGSVALHSGSKWTNLVVTSNLGFKQHCYDFRVPPKLICKHLYKPSCVLFQCYLSSLGKMHAQVLDQPYPISPNMGLTIDMSSLGYTLLTCLELYLDLPLNNPLKFLGSATRDGRPEPMYYLGFMIPRVVMTQILSAVWTMTLDLGLDCTGKAQAIPMRQEHQLAFQKQCYLYKANQKAESLANCSDKLNCPMLKSLVRKLLERDFFNHGGHPHTRGLVF.

Residues 1–25 (MRWKRMERRPPLTPLRRSRTQSSGG) are disordered. ATP-binding positions include 90–98 (LGRGAFGII) and Lys-108. Asp-201 (proton acceptor) is an active-site residue.

As to quaternary structure, interacts with protein K-bZIP/K8. Interacts with host beta-catenin/CTNNB1. Post-translationally, AUtophosphorylated.

It localises to the host nucleus. It carries out the reaction L-seryl-[protein] + ATP = O-phospho-L-seryl-[protein] + ADP + H(+). The enzyme catalyses L-threonyl-[protein] + ATP = O-phospho-L-threonyl-[protein] + ADP + H(+). Serine/threonine protein kinase that plays a role in viral gene expression, viral DNA replication and encapsidation, and nuclear egress of virions. Regulates host transcriptional activity through interactions with RNA helicase and c-Jun N-terminal kinase (JNK) and viral transcriptional activity through interactions with the viral protein K-bZIP/K8. Induces host chromosome condensation and phosphorylation of histone H3. Phosphorylates the DNA polymerase processivity factor hence modulating its processivity function. Inhibits the host Wnt signaling pathway via direct interactions with beta-catenin/CTNNB1 while the kinase activity of vPK is not required for this inhibitory activity. Also phosphorylates host SAMHD1 and thereby counteracts its antiviral effect by reducing its dNTP hydrolase activity. The protein is Viral protein kinase (vPK) of Human herpesvirus 8 type P (isolate GK18) (HHV-8).